Consider the following 334-residue polypeptide: Aspartate carbamoyltransferase catalytic subunit (334 aa).

Carbamoyl phosphate-binding residues include Arg-70 and Thr-71. An L-aspartate-binding site is contributed by Lys-98. The carbamoyl phosphate site is built by Arg-120, His-150, and Gln-153. L-aspartate contacts are provided by Arg-183 and Arg-238. The carbamoyl phosphate site is built by Gly-279 and Pro-280.

This sequence belongs to the aspartate/ornithine carbamoyltransferase superfamily. ATCase family. Heterododecamer (2C3:3R2) of six catalytic PyrB chains organized as two trimers (C3), and six regulatory PyrI chains organized as three dimers (R2).

It catalyses the reaction carbamoyl phosphate + L-aspartate = N-carbamoyl-L-aspartate + phosphate + H(+). It participates in pyrimidine metabolism; UMP biosynthesis via de novo pathway; (S)-dihydroorotate from bicarbonate: step 2/3. Catalyzes the condensation of carbamoyl phosphate and aspartate to form carbamoyl aspartate and inorganic phosphate, the committed step in the de novo pyrimidine nucleotide biosynthesis pathway. In Marinomonas sp. (strain MWYL1), this protein is Aspartate carbamoyltransferase catalytic subunit.